Here is a 322-residue protein sequence, read N- to C-terminus: MRKKSLTLLSDGYLFRKENTIYFENARGKKPLAIEGIYDIYIYGKVSISSQALHYLAQKGIALHFFNHYGYYDGSFYPRESLHSGYLVVNQVEHYLDKDKRLELAKLFIIGGIKNMEWNLLKFKNKTKFSSYIEELNNCNKITEVMNVEGRVRTEYYRLWDETLPDDFKIVKRTRRPPKNEMNALISFLNSRLYPAIITELYNTQLTPTVSYLHEPHERRFSLALDLSEIFKPMIADRLANRLVKQGIIQKKHFRDDLNGVLLNKEGMKVVLEHFNKEMDKTVNHKKLKKNVSKRRLIRLEAYKLVKHLVGQKRYEPLVAWF.

Mn(2+) is bound by residues E149, H214, and E229.

The protein belongs to the CRISPR-associated endonuclease Cas1 family. As to quaternary structure, homodimer, forms a heterotetramer with a Cas2 homodimer. Requires Mg(2+) as cofactor. The cofactor is Mn(2+).

CRISPR (clustered regularly interspaced short palindromic repeat), is an adaptive immune system that provides protection against mobile genetic elements (viruses, transposable elements and conjugative plasmids). CRISPR clusters contain spacers, sequences complementary to antecedent mobile elements, and target invading nucleic acids. CRISPR clusters are transcribed and processed into CRISPR RNA (crRNA). Acts as a dsDNA endonuclease. Involved in the integration of spacer DNA into the CRISPR cassette. This chain is CRISPR-associated endonuclease Cas1, found in Methanocaldococcus jannaschii (strain ATCC 43067 / DSM 2661 / JAL-1 / JCM 10045 / NBRC 100440) (Methanococcus jannaschii).